We begin with the raw amino-acid sequence, 260 residues long: Shikimate dehydrogenase (NADP(+)) (260 aa).

Shikimate is bound by residues 14–16 (SAS) and Thr-60. Lys-64 (proton acceptor) is an active-site residue. Shikimate-binding residues include Asn-85 and Asp-100. NADP(+) is bound by residues 121–125 (GAGGA), 145–150 (NRTYER), and Phe-201. Residue Tyr-203 participates in shikimate binding. An NADP(+)-binding site is contributed by Gly-225.

Belongs to the shikimate dehydrogenase family. In terms of assembly, homodimer.

The catalysed reaction is shikimate + NADP(+) = 3-dehydroshikimate + NADPH + H(+). It functions in the pathway metabolic intermediate biosynthesis; chorismate biosynthesis; chorismate from D-erythrose 4-phosphate and phosphoenolpyruvate: step 4/7. Involved in the biosynthesis of the chorismate, which leads to the biosynthesis of aromatic amino acids. Catalyzes the reversible NADPH linked reduction of 3-dehydroshikimate (DHSA) to yield shikimate (SA). This chain is Shikimate dehydrogenase (NADP(+)), found in Pyrobaculum islandicum (strain DSM 4184 / JCM 9189 / GEO3).